Here is a 480-residue protein sequence, read N- to C-terminus: Coronin-2B (480 aa).

WD repeat units lie at residues 29-77, 78-127, 128-170, 171-212, 213-259, 260-305, and 306-345; these read HCFD…GRIE, PNYP…RNMT, EALL…LDVG, EPVK…PRSG, RVLQ…EDLS, MPLI…TEKP, and YLSYLMEFRSPAPQKGLGVMPKHGLDVSACEVFRFYKLVT. Residues 436–479 adopt a coiled-coil conformation; it reads NELLRMFFRQQDEIRRLKEELAQKDIRIRQLQLELKNLRNSPKN.

It belongs to the WD repeat coronin family. Binds to F-actin and to vinculin. As to expression, expressed predominantly in brain.

It is found in the cytoplasm. The protein resides in the cytoskeleton. Its function is as follows. May play a role in the reorganization of neuronal actin structure. The sequence is that of Coronin-2B (CORO2B) from Homo sapiens (Human).